The sequence spans 113 residues: UPF0342 protein MGAS2096_Spy0691 (113 aa).

The protein belongs to the UPF0342 family.

The sequence is that of UPF0342 protein MGAS2096_Spy0691 from Streptococcus pyogenes serotype M12 (strain MGAS2096).